Here is a 196-residue protein sequence, read N- to C-terminus: dCTP deaminase, dUMP-forming (196 aa).

Residues 101-106 (KSSLGR), D119, 127-129 (TLE), Q148, Y162, and Q174 each bind dCTP. The Proton donor/acceptor role is filled by E129.

This sequence belongs to the dCTP deaminase family. Homotrimer.

The enzyme catalyses dCTP + 2 H2O = dUMP + NH4(+) + diphosphate. It functions in the pathway pyrimidine metabolism; dUMP biosynthesis; dUMP from dCTP: step 1/1. Bifunctional enzyme that catalyzes both the deamination of dCTP to dUTP and the hydrolysis of dUTP to dUMP without releasing the toxic dUTP intermediate. The chain is dCTP deaminase, dUMP-forming from Thermobifida fusca (strain YX).